A 295-amino-acid chain; its full sequence is 5'-adenylylsulfate reductase-like 6 (295 aa).

The signal sequence occupies residues methionine 1–alanine 22. A Thioredoxin domain is found at threonine 23 to glycine 161. Asparagine 136 is a glycosylation site (N-linked (GlcNAc...) asparagine). A helical transmembrane segment spans residues alanine 208–valine 228.

It localises to the membrane. The sequence is that of 5'-adenylylsulfate reductase-like 6 (APRL6) from Arabidopsis thaliana (Mouse-ear cress).